The following is a 61-amino-acid chain: Large ribosomal subunit protein uL30 (61 aa).

It belongs to the universal ribosomal protein uL30 family. Part of the 50S ribosomal subunit.

This chain is Large ribosomal subunit protein uL30, found in Bordetella avium (strain 197N).